A 251-amino-acid polypeptide reads, in one-letter code: Cytochrome c oxidase subunit 2 (251 aa).

2 helical membrane-spanning segments follow: residues 42–62 (NIMF…FTIV) and 83–103 (IIWT…SFIL). The Cu cation site is built by histidine 186, cysteine 221, glutamate 223, cysteine 225, histidine 229, and methionine 232. Glutamate 223 contributes to the Mg(2+) binding site.

The protein belongs to the cytochrome c oxidase subunit 2 family. Component of the cytochrome c oxidase (complex IV, CIV), a multisubunit enzyme composed of a catalytic core of 3 subunits and several supernumerary subunits. The complex exists as a monomer or a dimer and forms supercomplexes (SCs) in the inner mitochondrial membrane with ubiquinol-cytochrome c oxidoreductase (cytochrome b-c1 complex, complex III, CIII). Requires Cu cation as cofactor.

It is found in the mitochondrion inner membrane. It catalyses the reaction 4 Fe(II)-[cytochrome c] + O2 + 8 H(+)(in) = 4 Fe(III)-[cytochrome c] + 2 H2O + 4 H(+)(out). Its function is as follows. Component of the cytochrome c oxidase, the last enzyme in the mitochondrial electron transport chain which drives oxidative phosphorylation. The respiratory chain contains 3 multisubunit complexes succinate dehydrogenase (complex II, CII), ubiquinol-cytochrome c oxidoreductase (cytochrome b-c1 complex, complex III, CIII) and cytochrome c oxidase (complex IV, CIV), that cooperate to transfer electrons derived from NADH and succinate to molecular oxygen, creating an electrochemical gradient over the inner membrane that drives transmembrane transport and the ATP synthase. Cytochrome c oxidase is the component of the respiratory chain that catalyzes the reduction of oxygen to water. Electrons originating from reduced cytochrome c in the intermembrane space (IMS) are transferred via the dinuclear copper A center (CU(A)) of subunit 2 and heme A of subunit 1 to the active site in subunit 1, a binuclear center (BNC) formed by heme A3 and copper B (CU(B)). The BNC reduces molecular oxygen to 2 water molecules using 4 electrons from cytochrome c in the IMS and 4 protons from the mitochondrial matrix. This is Cytochrome c oxidase subunit 2 (COX2) from Candida glabrata (strain ATCC 2001 / BCRC 20586 / JCM 3761 / NBRC 0622 / NRRL Y-65 / CBS 138) (Yeast).